The primary structure comprises 172 residues: Resuscitation-promoting factor RpfE (172 aa).

The signal sequence occupies residues 1–28 (MKNARTTLIAAAIAGTLVTTSPAGIANA). The interval 33-89 (LDPNAAAGPDAVGFDPNLPPAPDAAPVDTPPAPEDAGFDPNLPPPLAPDFLSPPAEE) is disordered. The segment covering 49-65 (NLPPAPDAAPVDTPPAP) has biased composition (pro residues).

The protein belongs to the transglycosylase family. Rpf subfamily. Interacts with RipA.

Factor that stimulates resuscitation of dormant cells. Has peptidoglycan (PG) hydrolytic activity. Active in the pM concentration range. Has little to no effect on actively-growing cells. PG fragments could either directly activate the resuscitation pathway of dormant bacteria or serve as a substrate for endogenous Rpf, resulting in low molecular weight products with resuscitation activity. Functionally, stimulates growth of stationary phase M.bovis (a slow-growing Mycobacterium), reduces the lag phase of diluted fast-growers M.smegmatis and Micrococcus luteus. Sequential gene disruption indicates RpfB and RpfE are higher than RpfD and RpfC in functional hierarchy. The polypeptide is Resuscitation-promoting factor RpfE (rpfE) (Mycobacterium tuberculosis (strain ATCC 25618 / H37Rv)).